The chain runs to 275 residues: MSNSRQHQGHFARKRFGQNFLVDHGVIDSIVSTIGPARGQRMVEIGPGLGALTEPLIERLATPESPLHAVELDRDLIGRLQQRFGALLELHAGDALAFDFRSLAAPGDKPSLRIVGNLPYNISSPLLFHLMTFADAVIDQHFMLQNEVVERMVAEPGTKAFSRLSVMLQYRYVMEKMLDVPPESFQPPPKVDSAIVRMIPYEPHELPDVDPVLLGEVVTAAFSQRRKMLRNTLGDYRETIDFDALGFDLARRAEDVSVAEYVGVAQALAAVRKAG.

Positions 19, 21, 46, 71, 94, and 117 each coordinate S-adenosyl-L-methionine.

This sequence belongs to the class I-like SAM-binding methyltransferase superfamily. rRNA adenine N(6)-methyltransferase family. RsmA subfamily.

It localises to the cytoplasm. The catalysed reaction is adenosine(1518)/adenosine(1519) in 16S rRNA + 4 S-adenosyl-L-methionine = N(6)-dimethyladenosine(1518)/N(6)-dimethyladenosine(1519) in 16S rRNA + 4 S-adenosyl-L-homocysteine + 4 H(+). Its function is as follows. Specifically dimethylates two adjacent adenosines (A1518 and A1519) in the loop of a conserved hairpin near the 3'-end of 16S rRNA in the 30S particle. May play a critical role in biogenesis of 30S subunits. The protein is Ribosomal RNA small subunit methyltransferase A of Burkholderia lata (strain ATCC 17760 / DSM 23089 / LMG 22485 / NCIMB 9086 / R18194 / 383).